Here is a 124-residue protein sequence, read N- to C-terminus: TP53-target gene 3 protein (124 aa).

A compositionally biased stretch (polar residues) spans 1–11 (MRASPCISQPA). Residues 1–42 (MRASPCISQPAASWHPRPSALRPTAGSGPDTRTPGTVEDGSA) are disordered.

In terms of tissue distribution, strongly expressed in testis. Weakly expressed in heart, placenta and skeletal muscle.

It is found in the cytoplasm. It localises to the nucleus. In terms of biological role, may play a significant role in p53/TP53-mediating signaling pathway. The sequence is that of TP53-target gene 3 protein from Homo sapiens (Human).